We begin with the raw amino-acid sequence, 275 residues long: Ribosomal RNA small subunit methyltransferase A (275 aa).

S-adenosyl-L-methionine is bound by residues Asn-15, Leu-17, Gly-42, Glu-63, Asp-88, and Asn-111.

This sequence belongs to the class I-like SAM-binding methyltransferase superfamily. rRNA adenine N(6)-methyltransferase family. RsmA subfamily.

It is found in the cytoplasm. The catalysed reaction is adenosine(1518)/adenosine(1519) in 16S rRNA + 4 S-adenosyl-L-methionine = N(6)-dimethyladenosine(1518)/N(6)-dimethyladenosine(1519) in 16S rRNA + 4 S-adenosyl-L-homocysteine + 4 H(+). Its function is as follows. Specifically dimethylates two adjacent adenosines (A1518 and A1519) in the loop of a conserved hairpin near the 3'-end of 16S rRNA in the 30S particle. May play a critical role in biogenesis of 30S subunits. The polypeptide is Ribosomal RNA small subunit methyltransferase A (Geobacter metallireducens (strain ATCC 53774 / DSM 7210 / GS-15)).